Here is a 141-residue protein sequence, read N- to C-terminus: Hemoglobin subunit alpha (141 aa).

Residues 1 to 141 (VLSPADKANI…VSTVLTSKYR (141 aa)) form the Globin domain. Residue Ser3 is modified to Phosphoserine. N6-succinyllysine occurs at positions 7 and 11. The residue at position 16 (Lys16) is an N6-acetyllysine; alternate. An N6-succinyllysine; alternate modification is found at Lys16. At Tyr24 the chain carries Phosphotyrosine. The residue at position 35 (Ser35) is a Phosphoserine. An N6-succinyllysine modification is found at Lys40. Ser49 is modified (phosphoserine). His58 lines the O2 pocket. His87 provides a ligand contact to heme b. A Phosphoserine modification is found at Ser102. The residue at position 108 (Thr108) is a Phosphothreonine. A phosphoserine mark is found at Ser124 and Ser131. 2 positions are modified to phosphothreonine: Thr134 and Thr137. Ser138 bears the Phosphoserine mark.

This sequence belongs to the globin family. In terms of assembly, heterotetramer of two alpha chains and two beta chains. In terms of tissue distribution, red blood cells.

Functionally, involved in oxygen transport from the lung to the various peripheral tissues. In terms of biological role, hemopressin acts as an antagonist peptide of the cannabinoid receptor CNR1. Hemopressin-binding efficiently blocks cannabinoid receptor CNR1 and subsequent signaling. In Meles meles (Eurasian badger), this protein is Hemoglobin subunit alpha (HBA).